A 76-amino-acid polypeptide reads, in one-letter code: Zinc finger protein 706 (76 aa).

Residues 1-13 (MARGQQKIQSQQK) show a composition bias toward low complexity. Disordered regions lie at residues 1–32 (MARGQQKIQSQQKNAKKQAEQKKKQGHDQKAA) and 53–76 (TFKQHFESKHPKTPLPPELADVQA). Composition is skewed to basic and acidic residues over residues 17–31 (KQAEQKKKQGHDQKA) and 53–62 (TFKQHFESKH). The segment at 39–62 (YTCTVCRTQMPDPKTFKQHFESKH) adopts a C2H2-type zinc-finger fold.

The protein localises to the cytoplasm. It localises to the nucleus. Transcription repressor involved in the exit of embryonic stem cells (ESCs) from self-renewal. This Gallus gallus (Chicken) protein is Zinc finger protein 706.